A 373-amino-acid polypeptide reads, in one-letter code: Dof zinc finger protein 3 (373 aa).

Residues 1–23 form a disordered region; sequence MASGGALSPVEEKPTVVKTTKAE. The segment covering 10–23 has biased composition (basic and acidic residues); sequence VEEKPTVVKTTKAE. The Dof-type zinc-finger motif lies at 45–99; sequence PCCPRCNSIKTKFCYYNNYSMAQPRYFCRECRRYWTQGGSLRNVPVGGGCRKSKR. Cys-47, Cys-50, Cys-72, and Cys-75 together coordinate Zn(2+). Residues 297-327 form a disordered region; the sequence is ALGGADEQQGGGDGGEAVMTKDTGGGASSSA.

Interacts with RISBZ1/BZIP58.

Its subcellular location is the nucleus. Functionally, transcriptional activator that binds specifically to the DNA consensus core sequence 5'-AAAG-3' also known as prolamin box. Can activate the expression of genes encoding for the seed storage proteins glutelin, prolamin and globulin. Functions synergistically with RISBZ/BZIP58 to positively regulate quantitatively many seed storage proteins. Functions synergistically with RISBZ1/BZIP58 to positively regulate some metabolic enzymes, such as alanine aminotransferase and pyruvate phosphate dikinase, that are expressed in developing seeds. Functions synergistically with RISBZ1/BZIP58 to positively regulate genes that are key players in the development of aleurone layers. Functions synergistically with RISBZ1/BZIP58 to positively regulate the glutelin GLUD-1 gene in endosperm of developing seeds. Can activate the expression of the bifunctional lysine-degrading enzyme, lysine ketoglutarate reductase/saccharopine dehydrogenase (LKR/SDH), one of the key regulators determining free lysine content in plants. In germinating seeds, involved in the gibberellin-mediated activation of the alpha-amylase AMY1.1/AMY1A gene. In Oryza sativa subsp. japonica (Rice), this protein is Dof zinc finger protein 3.